The primary structure comprises 87 residues: Small ribosomal subunit protein bS20 (87 aa).

This sequence belongs to the bacterial ribosomal protein bS20 family.

Functionally, binds directly to 16S ribosomal RNA. The chain is Small ribosomal subunit protein bS20 from Shigella flexneri.